Consider the following 312-residue polypeptide: Transcription initiation factor IIB (312 aa).

The TFIIB-type zinc finger occupies Phe10–Gly42. Cys14, Cys17, Cys34, and Cys37 together coordinate Zn(2+). Tandem repeats lie at residues Phe120–Pro196 and Phe213–Thr290.

It belongs to the TFIIB family. As to quaternary structure, associates with TFIID-IIA (DA complex) to form TFIID-IIA-IIB (DAB-complex) which is then recognized by polymerase II.

It is found in the nucleus. Functionally, general factor that plays a major role in the activation of eukaryotic genes transcribed by RNA polymerase II. The polypeptide is Transcription initiation factor IIB (Encephalitozoon cuniculi (strain GB-M1) (Microsporidian parasite)).